A 218-amino-acid chain; its full sequence is Uracil-DNA glycosylase (218 aa).

D59 functions as the Proton acceptor in the catalytic mechanism.

This sequence belongs to the uracil-DNA glycosylase (UDG) superfamily. UNG family.

The protein resides in the cytoplasm. The enzyme catalyses Hydrolyzes single-stranded DNA or mismatched double-stranded DNA and polynucleotides, releasing free uracil.. In terms of biological role, excises uracil residues from the DNA which can arise as a result of misincorporation of dUMP residues by DNA polymerase or due to deamination of cytosine. This is Uracil-DNA glycosylase from Staphylococcus aureus (strain JH1).